Reading from the N-terminus, the 210-residue chain is Outer surface protein C (210 aa).

The signal sequence occupies residues 1–18 (MKKNTLSAILMTLFLFIS). Cysteine 19 carries the N-palmitoyl cysteine lipid modification. Cysteine 19 is lipidated: S-diacylglycerol cysteine.

This sequence belongs to the OspC lipoprotein family. Homodimer. Binds human plasminogen on the bacterial surface, also binds human plasmin. Interacts with tick I.ricinus salivary protein Iric-1. Interacts with human complement C4 beta chain (C4B); whole bacteria bind to wells coated with C4b. Binding is inhibited by human complement factor C2.

The protein resides in the cell outer membrane. It is found in the cell surface. In terms of biological role, a major immunodominant protein in mammalian hosts. Required for the initial stages of mammalian infection. Interaction with tick I.ricinus salivary protein Salp15 protects the bacteria from antibody-mediated killing in vitro and in vivo. Inhibits macrophage-mediated phagocytosis of the bacteria. Binds human plasminogen; this probably confers an extracellular protease activity on the bacteria that allows it to traverse tissue. Binds human complement C4-B, which may inhibit the complement cascade. Experiments in mice suggest it may play another role after initial infection. The polypeptide is Outer surface protein C (Borreliella burgdorferi (strain ATCC 35210 / DSM 4680 / CIP 102532 / B31) (Borrelia burgdorferi)).